The following is a 611-amino-acid chain: Oligoendopeptidase F homolog (611 aa).

Histidine 384 provides a ligand contact to Zn(2+). Glutamate 385 is a catalytic residue. Residues histidine 388 and histidine 391 each coordinate Zn(2+).

Belongs to the peptidase M3B family. It depends on Zn(2+) as a cofactor.

The protein is Oligoendopeptidase F homolog (pepF) of Mycoplasma pneumoniae (strain ATCC 29342 / M129 / Subtype 1) (Mycoplasmoides pneumoniae).